Reading from the N-terminus, the 422-residue chain is NADP-dependent malic enzyme (422 aa).

Tyr39 acts as the Proton donor in catalysis. The active-site Proton acceptor is Lys94. Lys94 lines the substrate pocket. A divalent metal cation contacts are provided by Glu136, Asp137, and Asp162. Residues 195–198 (AGAA), Asn286, and Asn318 each bind NADP(+). Asn318 provides a ligand contact to substrate.

It belongs to the malic enzymes family. Requires Mg(2+) as cofactor. The cofactor is Mn(2+).

The enzyme catalyses (S)-malate + NADP(+) = pyruvate + CO2 + NADPH. It carries out the reaction oxaloacetate + H(+) = pyruvate + CO2. In Halomonas elongata (strain ATCC 33173 / DSM 2581 / NBRC 15536 / NCIMB 2198 / 1H9), this protein is NADP-dependent malic enzyme.